Consider the following 204-residue polypeptide: Cytochrome c biogenesis ATP-binding export protein CcmA (204 aa).

Positions 3 to 204 (LSGHGLRCVR…ARELRIGGTT (202 aa)) constitute an ABC transporter domain. 35 to 42 (GPNGAGKT) contributes to the ATP binding site.

The protein belongs to the ABC transporter superfamily. CcmA exporter (TC 3.A.1.107) family. As to quaternary structure, the complex is composed of two ATP-binding proteins (CcmA) and two transmembrane proteins (CcmB).

It is found in the cell inner membrane. The enzyme catalyses heme b(in) + ATP + H2O = heme b(out) + ADP + phosphate + H(+). Part of the ABC transporter complex CcmAB involved in the biogenesis of c-type cytochromes; once thought to export heme, this seems not to be the case, but its exact role is uncertain. Responsible for energy coupling to the transport system. The sequence is that of Cytochrome c biogenesis ATP-binding export protein CcmA from Nitrobacter hamburgensis (strain DSM 10229 / NCIMB 13809 / X14).